A 21-amino-acid chain; its full sequence is Kassinatuerin-1 (21 aa).

Isoleucine 21 is subject to Isoleucine amide.

In terms of tissue distribution, expressed by the skin dorsal glands.

The protein resides in the secreted. Shows broad-spectrum antimicrobial activity against the Gram-negative bacterium E.coli (MIC=6.25 uM), K.pneumoniae (MIC=25 uM), E.cloacae (MIC=6.25 uM), P.aeruginosa (MIC=25 uM), the Gram-positive bacterium S.aureus (MIC=6.25 uM), S.epidermidis (MIC=6.25 uM), E.faecalis (MIC=12.5 uM), and the fungus C.albicans (MIC=100 uM). Has no antimicrobial effect against P.mirabilis (MIC&gt;100 uM). Has relatively high cytolytic and hemolytic activities. Its alpha-helix has considerable amphipathic character. The polypeptide is Kassinatuerin-1 (Kassina senegalensis (Senegal running frog)).